We begin with the raw amino-acid sequence, 322 residues long: Acetyl-coenzyme A carboxylase carboxyl transferase subunit beta (322 aa).

Residues 24 to 293 (LWIKCPDTGQ…PAVEEPAVVD (270 aa)) enclose the CoA carboxyltransferase N-terminal domain.

The protein belongs to the AccD/PCCB family. Acetyl-CoA carboxylase is a heterohexamer composed of biotin carboxyl carrier protein (AccB), biotin carboxylase (AccC) and two subunits each of ACCase subunit alpha (AccA) and ACCase subunit beta (AccD).

The protein localises to the cytoplasm. The enzyme catalyses N(6)-carboxybiotinyl-L-lysyl-[protein] + acetyl-CoA = N(6)-biotinyl-L-lysyl-[protein] + malonyl-CoA. It functions in the pathway lipid metabolism; malonyl-CoA biosynthesis; malonyl-CoA from acetyl-CoA: step 1/1. In terms of biological role, component of the acetyl coenzyme A carboxylase (ACC) complex. Biotin carboxylase (BC) catalyzes the carboxylation of biotin on its carrier protein (BCCP) and then the CO(2) group is transferred by the transcarboxylase to acetyl-CoA to form malonyl-CoA. The sequence is that of Acetyl-coenzyme A carboxylase carboxyl transferase subunit beta from Rhodopseudomonas palustris (strain HaA2).